We begin with the raw amino-acid sequence, 1164 residues long: WASH complex subunit 5 (1164 aa).

It belongs to the strumpellin family. In terms of assembly, probable component of the WASH complex.

The polypeptide is WASH complex subunit 5 (Dictyostelium discoideum (Social amoeba)).